The sequence spans 353 residues: Cyclic GMP-AMP synthase-like receptor (353 aa).

ATP contacts are provided by residues serine 60 and 72–74; that span reads EYD. Residues glutamate 72, aspartate 74, and aspartate 183 each contribute to the Mg(2+) site. Residue aspartate 183 participates in GTP binding. Lysine 245 contacts ATP. Positions 269 and 270 each coordinate Mn(2+).

This sequence belongs to the mab-21 family. Mg(2+) is required as a cofactor. The cofactor is Mn(2+).

It catalyses the reaction GTP + ATP = 2',3'-cGAMP + 2 diphosphate. The enzyme catalyses GTP + ATP = pppGp(2'-5')A + diphosphate. It carries out the reaction pppGp(2'-5')A = 2',3'-cGAMP + diphosphate. In terms of biological role, nucleotidyltransferase that catalyzes the formation of cyclic GMP-AMP (2',3'-cGAMP) from ATP and GTP and plays a key role in innate immunity. Acts as a key sensor of double-stranded RNA (dsRNA), the presence of dsRNA in the cytoplasm being a danger signal that triggers the immune responses. Directly binds dsRNA, activating the nucleotidyltransferase activity, leading to synthesis of 2',3'-cGAMP, a second messenger that binds to and activates Sting, thereby triggering the immune response via activation of the NF-kappa-B transcription factor. The protein is Cyclic GMP-AMP synthase-like receptor of Nicrophorus vespilloides (Boreal carrion beetle).